Here is a 614-residue protein sequence, read N- to C-terminus: GPI transamidase component GAA1 (614 aa).

The Cytoplasmic segment spans residues 1–19; the sequence is MALLEKLHRRIVDMGLVPR. Residues 20-40 traverse the membrane as a helical segment; the sequence is IIALLPVISMLCALFGFISIA. Over 41–356 the chain is Lumenal; it reads ILPMDGQYRR…APRQFVSISS (316 aa). An N-linked (GlcNAc...) asparagine glycan is attached at Asn87. Residues 357 to 377 traverse the membrane as a helical segment; sequence YLPSAVALSIAFAISSLNAFI. The Cytoplasmic portion of the chain corresponds to 378–394; it reads NNAYANISLFSEYNLVA. The chain crosses the membrane as a helical span at residues 395–415; sequence LLVWFVSLVISFVVSQAFLLI. At 416-464 the chain is on the lumenal side; the sequence is PSSGLLMTISMASCFLPLILSRKIHISEPLSYRLKNVAFLYFSLVSTSL. Residues 465–485 traverse the membrane as a helical segment; that stretch reads LMINFAMALLIGTLAFPMTFV. Over 486-535 the chain is Cytoplasmic; the sequence is KTIVESSSEHEVTTQSSNPIKTEPKDEIELVENHMDTTPATPQQQKQKLK. The helical transmembrane segment at 536–556 threads the bilayer; sequence NLVLLILTNPFISITLFGLFF. The Lumenal segment spans residues 557 to 577; it reads DDEFHGFDIINKLVSAWLDLK. The chain crosses the membrane as a helical span at residues 578–598; it reads CWSWFVLCIGWLPCWLLILAS. Over 599–614 the chain is Cytoplasmic; it reads SFESKSVVVRSKEKQS. Positions 610-614 match the Prevents secretion from ER motif; it reads KEKQS.

Forms a complex with CDC91, GPI17, GPI16 and GPI8.

Its subcellular location is the endoplasmic reticulum membrane. It participates in glycolipid biosynthesis; glycosylphosphatidylinositol-anchor biosynthesis. Component of the GPI transamidase complex. Required for a terminal step of GPI anchor attachment onto proteins. Affects endocytosis. This is GPI transamidase component GAA1 (GAA1) from Saccharomyces cerevisiae (strain ATCC 204508 / S288c) (Baker's yeast).